A 578-amino-acid polypeptide reads, in one-letter code: NADH-quinone oxidoreductase subunit C/D (578 aa).

The tract at residues 1–167 (MILSLFKLFG…DEFYFTKQKE (167 aa)) is NADH dehydrogenase I subunit C. The segment at 192–578 (EYMFLNFGPN…IDFVMSDVDR (387 aa)) is NADH dehydrogenase I subunit D.

This sequence in the N-terminal section; belongs to the complex I 30 kDa subunit family. The protein in the C-terminal section; belongs to the complex I 49 kDa subunit family. NDH-1 is composed of 13 different subunits. Subunits NuoB, CD, E, F, and G constitute the peripheral sector of the complex.

The protein resides in the cell inner membrane. It carries out the reaction a quinone + NADH + 5 H(+)(in) = a quinol + NAD(+) + 4 H(+)(out). NDH-1 shuttles electrons from NADH, via FMN and iron-sulfur (Fe-S) centers, to quinones in the respiratory chain. The immediate electron acceptor for the enzyme in this species is believed to be ubiquinone. Couples the redox reaction to proton translocation (for every two electrons transferred, four hydrogen ions are translocated across the cytoplasmic membrane), and thus conserves the redox energy in a proton gradient. The chain is NADH-quinone oxidoreductase subunit C/D from Buchnera aphidicola subsp. Cinara cedri (strain Cc).